The following is a 191-amino-acid chain: Pyridoxal 5'-phosphate synthase subunit PdxT (191 aa).

Gly-46 to Ser-48 contacts L-glutamine. The active-site Nucleophile is Cys-78. Residues Arg-105 and Ile-134–Arg-135 contribute to the L-glutamine site. Residues His-170 and Glu-172 each act as charge relay system in the active site.

Belongs to the glutaminase PdxT/SNO family. In terms of assembly, in the presence of PdxS, forms a dodecamer of heterodimers. Only shows activity in the heterodimer.

It carries out the reaction aldehydo-D-ribose 5-phosphate + D-glyceraldehyde 3-phosphate + L-glutamine = pyridoxal 5'-phosphate + L-glutamate + phosphate + 3 H2O + H(+). The enzyme catalyses L-glutamine + H2O = L-glutamate + NH4(+). It functions in the pathway cofactor biosynthesis; pyridoxal 5'-phosphate biosynthesis. In terms of biological role, catalyzes the hydrolysis of glutamine to glutamate and ammonia as part of the biosynthesis of pyridoxal 5'-phosphate. The resulting ammonia molecule is channeled to the active site of PdxS. The protein is Pyridoxal 5'-phosphate synthase subunit PdxT of Carboxydothermus hydrogenoformans (strain ATCC BAA-161 / DSM 6008 / Z-2901).